The sequence spans 452 residues: NADH-quinone oxidoreductase subunit N 2 (452 aa).

14 consecutive transmembrane segments (helical) span residues 6-26 (VLIPEISLLILAIISFFYGFI), 33-53 (TYILSFLSILTAIILSVFNFG), 70-90 (TLRILVLFIGVFIIGLSYSDL), 97-117 (SVEYVFLLLLSLFGMNLMIVA), 120-140 (LLILYLALETFSLSLYILAGF), 154-174 (YFILGTLSSIILLGSIVFFYA), 194-214 (ILLGVVFLISAFAFKLSLAPF), 232-252 (FLSTAPKVAVFGALINIFLSI), 258-278 (IQDLIVIISALSMLVGNVLAL), 286-306 (MLAYSSIAHAGYMFMAFLLPE), 311-331 (ISLIPYLIVYVFMNLSAFAFI), 355-375 (FCIIVIMFSLTGVPPTAGFIV), 387-407 (GYGSLVFFALLMSIFSAFYYL), and 432-452 (ALSGALLLIFLGLFPNLLLIF).

The protein belongs to the complex I subunit 2 family. As to quaternary structure, NDH-1 is composed of 14 different subunits. Subunits NuoA, H, J, K, L, M, N constitute the membrane sector of the complex.

The protein resides in the cell inner membrane. The catalysed reaction is a quinone + NADH + 5 H(+)(in) = a quinol + NAD(+) + 4 H(+)(out). Its function is as follows. NDH-1 shuttles electrons from NADH, via FMN and iron-sulfur (Fe-S) centers, to quinones in the respiratory chain. The immediate electron acceptor for the enzyme in this species is believed to be ubiquinone. Couples the redox reaction to proton translocation (for every two electrons transferred, four hydrogen ions are translocated across the cytoplasmic membrane), and thus conserves the redox energy in a proton gradient. The chain is NADH-quinone oxidoreductase subunit N 2 from Thermodesulfovibrio yellowstonii (strain ATCC 51303 / DSM 11347 / YP87).